The primary structure comprises 289 residues: Serine/threonine-protein phosphatase Pgam5, mitochondrial (289 aa).

A helical transmembrane segment spans residues 7-23; the sequence is FACGTGAGLAAYYLQRL.

The protein belongs to the phosphoglycerate mutase family. BPG-dependent PGAM subfamily. In terms of assembly, interacts with Pk92B/ASK1.

The protein resides in the mitochondrion outer membrane. It carries out the reaction O-phospho-L-seryl-[protein] + H2O = L-seryl-[protein] + phosphate. It catalyses the reaction O-phospho-L-threonyl-[protein] + H2O = L-threonyl-[protein] + phosphate. Displays phosphatase activity for serine/threonine residues, and dephosphorylates and activates Pk92B kinase. Has apparently no phosphoglycerate mutase activity. This is Serine/threonine-protein phosphatase Pgam5, mitochondrial from Drosophila sechellia (Fruit fly).